The sequence spans 454 residues: L-serine dehydratase TdcG (454 aa).

The protein belongs to the iron-sulfur dependent L-serine dehydratase family. [4Fe-4S] cluster is required as a cofactor.

The catalysed reaction is L-serine = pyruvate + NH4(+). Its pathway is amino-acid degradation; L-threonine degradation via propanoate pathway. This is L-serine dehydratase TdcG (tdcG) from Escherichia coli (strain K12).